A 196-amino-acid polypeptide reads, in one-letter code: Endoribonuclease YbeY (196 aa).

Residues histidine 120, histidine 124, and histidine 130 each contribute to the Zn(2+) site.

Belongs to the endoribonuclease YbeY family. The cofactor is Zn(2+).

The protein resides in the cytoplasm. Functionally, single strand-specific metallo-endoribonuclease involved in late-stage 70S ribosome quality control and in maturation of the 3' terminus of the 16S rRNA. The polypeptide is Endoribonuclease YbeY (Corynebacterium diphtheriae (strain ATCC 700971 / NCTC 13129 / Biotype gravis)).